Here is a 478-residue protein sequence, read N- to C-terminus: MANKVGRITQVIGAVVDVQFDGHLPEILNALETTNQGNRLVLEVAQHLGESTVRCIAMDATEGLVRGLEVTDTGAPIQVPVGAGTLGRIMNVIGEPVDELGPIEAEATRGIHQPAPSYAEQATEAEILVTGIKVVDLLAPYAKGGKVGLFGGAGVGKTVLIMELINNVAKAHGGYSVFAGVGERTREGNDLYHEMIESNVNKDPHENGGSAAGSKCALVYGQMNEPPGARARVALTGLTVAEHFRDQGQDVLFFVDNIFRFTQAGSEVSALLGRIPSAVGYQPTLATDMGALQERITTTTKGSITSVQAIYVPADDLTDPAPAASFAHLDATTVLSRSIAEKGIYPAVDPLDSTSRMLSPAILGDEHYNTARQVQQTLQRYKALQDIIAILGMDELSEEDKITVARARKIERFLSQPFHVAEVFTGSPGKLVDLKDTIAGFKGLVEGKYDYLPEQAFYMVGSMEEAIEKGKKLAAEAA.

Gly151–Thr158 contacts ATP.

This sequence belongs to the ATPase alpha/beta chains family. In terms of assembly, F-type ATPases have 2 components, CF(1) - the catalytic core - and CF(0) - the membrane proton channel. CF(1) has five subunits: alpha(3), beta(3), gamma(1), delta(1), epsilon(1). CF(0) has three main subunits: a(1), b(2) and c(9-12). The alpha and beta chains form an alternating ring which encloses part of the gamma chain. CF(1) is attached to CF(0) by a central stalk formed by the gamma and epsilon chains, while a peripheral stalk is formed by the delta and b chains.

The protein resides in the cell inner membrane. It catalyses the reaction ATP + H2O + 4 H(+)(in) = ADP + phosphate + 5 H(+)(out). Its function is as follows. Produces ATP from ADP in the presence of a proton gradient across the membrane. The catalytic sites are hosted primarily by the beta subunits. This is ATP synthase subunit beta from Xanthobacter autotrophicus (strain ATCC BAA-1158 / Py2).